The chain runs to 255 residues: Probable membrane transporter protein HI_0198 (255 aa).

8 consecutive transmembrane segments (helical) span residues Leu-7–Gly-27, Gly-28–Gly-48, Ile-76–Ser-96, Val-99–Phe-119, Leu-132–Phe-152, Gly-153–Pro-173, Phe-191–Gly-211, and Val-235–Phe-255.

This sequence belongs to the 4-toluene sulfonate uptake permease (TSUP) (TC 2.A.102) family.

It is found in the cell membrane. The protein is Probable membrane transporter protein HI_0198 of Haemophilus influenzae (strain ATCC 51907 / DSM 11121 / KW20 / Rd).